Here is a 277-residue protein sequence, read N- to C-terminus: 2,5-diketo-D-gluconic acid reductase B (277 aa).

The active-site Proton donor is the tyrosine 51. Residue histidine 109 participates in substrate binding. 189 to 242 (SPLARRSELLTEQLLQELAVVYGVTPTQVVLRWHVQLGSTPIPKSADPDRQREN) provides a ligand contact to NADP(+).

The protein belongs to the aldo/keto reductase family.

Its subcellular location is the cytoplasm. The enzyme catalyses 2-dehydro-D-gluconate + NADP(+) = 2,5-didehydro-D-gluconate + NADPH + H(+). Its function is as follows. Catalyzes the reduction of 2,5-diketo-D-gluconic acid (25DKG) to 2-keto-L-gulonic acid (2KLG). 25DKGR-B has higher catalytic efficiency than 25DKGR-A. The sequence is that of 2,5-diketo-D-gluconic acid reductase B (dkgB) from Corynebacterium sp. (strain SHS752001).